Reading from the N-terminus, the 55-residue chain is uncharacterized protein (55 aa).

The chain crosses the membrane as a helical span at residues 27-47; that stretch reads IFLIYHFSPIYCPYLFLFTVF.

Its subcellular location is the membrane. This is an uncharacterized protein from Acheta domesticus (House cricket).